We begin with the raw amino-acid sequence, 363 residues long: Probable dual-specificity RNA methyltransferase RlmN (363 aa).

The Proton acceptor role is filled by glutamate 106. In terms of domain architecture, Radical SAM core spans 112-345; the sequence is HEYGNSVCVT…VTIRREQGHD (234 aa). Cysteine 119 and cysteine 350 are disulfide-bonded. The [4Fe-4S] cluster site is built by cysteine 126, cysteine 130, and cysteine 133. Residues 176 to 177, serine 208, 231 to 233, and asparagine 307 each bind S-adenosyl-L-methionine; these read GE and SLH. The active-site S-methylcysteine intermediate is the cysteine 350.

The protein belongs to the radical SAM superfamily. RlmN family. Requires [4Fe-4S] cluster as cofactor.

The protein localises to the cytoplasm. It catalyses the reaction adenosine(2503) in 23S rRNA + 2 reduced [2Fe-2S]-[ferredoxin] + 2 S-adenosyl-L-methionine = 2-methyladenosine(2503) in 23S rRNA + 5'-deoxyadenosine + L-methionine + 2 oxidized [2Fe-2S]-[ferredoxin] + S-adenosyl-L-homocysteine. The catalysed reaction is adenosine(37) in tRNA + 2 reduced [2Fe-2S]-[ferredoxin] + 2 S-adenosyl-L-methionine = 2-methyladenosine(37) in tRNA + 5'-deoxyadenosine + L-methionine + 2 oxidized [2Fe-2S]-[ferredoxin] + S-adenosyl-L-homocysteine. Specifically methylates position 2 of adenine 2503 in 23S rRNA and position 2 of adenine 37 in tRNAs. The polypeptide is Probable dual-specificity RNA methyltransferase RlmN (Bacillus velezensis (strain DSM 23117 / BGSC 10A6 / LMG 26770 / FZB42) (Bacillus amyloliquefaciens subsp. plantarum)).